Here is a 372-residue protein sequence, read N- to C-terminus: GDSL esterase/lipase At5g45910 (372 aa).

A signal peptide spans 1-19; that stretch reads MRINMLFIVAFSFLVSVRS. Serine 37 functions as the Nucleophile in the catalytic mechanism. N-linked (GlcNAc...) asparagine glycans are attached at residues asparagine 66, asparagine 101, and asparagine 137. Catalysis depends on residues aspartate 345 and histidine 348.

It belongs to the 'GDSL' lipolytic enzyme family.

The protein localises to the secreted. This Arabidopsis thaliana (Mouse-ear cress) protein is GDSL esterase/lipase At5g45910.